We begin with the raw amino-acid sequence, 391 residues long: Decapping nuclease RAI1 (391 aa).

E174 lines the a divalent metal cation pocket. E223 lines the substrate pocket. A divalent metal cation contacts are provided by D225, E244, and L245. Substrate contacts are provided by K246 and Q270.

Belongs to the DXO/Dom3Z family. Interacts with RAT1; the interaction is direct, stabilizes RAT1 protein structure and stimulates its exoribonuclease activity. The interaction also stimulates RAI1 pyrophosphohydrolase activity, probably by recruiting it to mRNA substrates. It depends on a divalent metal cation as a cofactor.

The protein localises to the nucleus. It catalyses the reaction a 5'-end NAD(+)-phospho-ribonucleoside in mRNA + H2O = a 5'-end phospho-ribonucleoside in mRNA + NAD(+) + H(+). It carries out the reaction a 5'-end (N(7)-methyl 5'-triphosphoguanosine)-ribonucleoside-ribonucleotide in mRNA + H2O = a (N(7)-methyl 5'-triphosphoguanosine)-nucleoside + a 5'-end phospho-ribonucleoside in mRNA + H(+). The enzyme catalyses a 5'-end triphospho-ribonucleoside in mRNA + H2O = a 5'-end phospho-ribonucleoside in mRNA + diphosphate + H(+). Functionally, decapping enzyme for NAD-capped RNAs: specifically hydrolyzes the nicotinamide adenine dinucleotide (NAD) cap from a subset of RNAs by removing the entire NAD moiety from the 5'-end of an NAD-capped RNA. The NAD-cap is present at the 5'-end of some RNAs and snoRNAs. In contrast to the canonical 5'-end N7 methylguanosine (m7G) cap, the NAD cap promotes mRNA decay. Also acts as a non-canonical decapping enzyme that removes the entire cap structure of m7G capped or incompletely capped RNAs. Has decapping activity toward incomplete 5'-end m7G cap mRNAs such as unmethylated 5'-end-capped RNA (cap0), while it has no activity toward 2'-O-ribose methylated m7G cap (cap1). Also possesses RNA 5'-pyrophosphohydrolase activity by hydrolyzing the 5'-end triphosphate to release pyrophosphates. Stimulates exoribonuclease activity of Rat1, allowing it to degrade RNAs with stable secondary structure more effectively. The chain is Decapping nuclease RAI1 from Candida albicans (strain SC5314 / ATCC MYA-2876) (Yeast).